The following is a 124-amino-acid chain: Glutaredoxin-2 (124 aa).

An intrachain disulfide couples cysteine 13 to cysteine 16.

Belongs to the glutaredoxin family. In terms of assembly, homodimer.

The protein resides in the host cytoplasm. In terms of biological role, glutaredoxin necessary for virion morphogenesis and virus replication. Functions as a thiol-disulfide transfer protein between membrane-associated OPG128 and substrates OPG095 or OPG053. The complete pathway for formation of disulfide bonds in intracellular virion membrane proteins sequentially involves oxidation of OPG072, OPG128 and OPG088. Exhibit thioltransferase and dehydroascorbate reductase activities in vitro. This Homo sapiens (Human) protein is Glutaredoxin-2 (OPG088).